Here is a 711-residue protein sequence, read N- to C-terminus: GDNF-inducible zinc finger protein 1 (711 aa).

In terms of domain architecture, BTB spans 31-103 (CDVTVSVEYQ…VYTAKVQVEE (73 aa)). The span at 153–168 (SGSQVSAAPAPRASVA) shows a compositional bias: low complexity. Disordered regions lie at residues 153-220 (SGSQ…PKIR) and 243-312 (RLRE…EGEK). Composition is skewed to basic and acidic residues over residues 197 to 212 (PPKK…KEVV), 243 to 252 (RLREQQKTAE), and 265 to 277 (SPDR…EQVS). Over residues 298–309 (EEEEEEEEEDEE) the composition is skewed to acidic residues. 10 consecutive C2H2-type zinc fingers follow at residues 317–340 (FKCS…KHRH), 348–371 (YRCD…RHVH), 377–400 (FPCE…LQVH), 407–429 (HRCG…ERTH), 435–457 (YGCT…MRIH), 463–485 (FVCD…KRCH), 491–513 (FMCE…NRIH), 519–541 (FKCE…IKVH), 547–569 (YCCD…RRIH), and 575–597 (FMCN…TSIH). A Phosphoserine modification is found at S613.

It belongs to the krueppel C2H2-type zinc-finger protein family. As to quaternary structure, interacts with NCL. In terms of tissue distribution, expressed in adult brain, heart, skeletal muscle, kidney and liver. Also detected in fetal brain and kidney, and at lower levels in fetal lung and liver.

Its subcellular location is the cytoplasm. The protein localises to the nucleus. It is found in the nucleoplasm. The protein resides in the nucleolus. Functionally, transcriptional repressor that binds the GZF1 responsive element (GRE) (consensus: 5'-TGCGCN[TG][CA]TATA-3'). May be regulating VSX2/HOX10 expression. This chain is GDNF-inducible zinc finger protein 1, found in Homo sapiens (Human).